Here is a 338-residue protein sequence, read N- to C-terminus: Phenylalanine--tRNA ligase alpha subunit (338 aa).

Glu-253 serves as a coordination point for Mg(2+).

The protein belongs to the class-II aminoacyl-tRNA synthetase family. Phe-tRNA synthetase alpha subunit type 1 subfamily. Tetramer of two alpha and two beta subunits. Mg(2+) is required as a cofactor.

The protein localises to the cytoplasm. It catalyses the reaction tRNA(Phe) + L-phenylalanine + ATP = L-phenylalanyl-tRNA(Phe) + AMP + diphosphate + H(+). The sequence is that of Phenylalanine--tRNA ligase alpha subunit from Legionella pneumophila (strain Paris).